The sequence spans 177 residues: Probable inosine/xanthosine triphosphatase (177 aa).

Belongs to the YjjX NTPase family. As to quaternary structure, homodimer. It depends on Mg(2+) as a cofactor. Mn(2+) serves as cofactor.

The enzyme catalyses XTP + H2O = XDP + phosphate + H(+). It carries out the reaction ITP + H2O = IDP + phosphate + H(+). Functionally, phosphatase that hydrolyzes non-canonical purine nucleotides such as XTP and ITP to their respective diphosphate derivatives. Probably excludes non-canonical purines from DNA/RNA precursor pool, thus preventing their incorporation into DNA/RNA and avoiding chromosomal lesions. The chain is Probable inosine/xanthosine triphosphatase from Pyrobaculum arsenaticum (strain DSM 13514 / JCM 11321 / PZ6).